The primary structure comprises 688 residues: Methionine--tRNA ligase (688 aa).

The short motif at 13-23 (PYANGQIHIGH) is the 'HIGH' region element. The Zn(2+) site is built by Cys-144, Cys-147, Cys-157, and Cys-160. The 'KMSKS' region motif lies at 335–339 (KMSKS). Lys-338 is an ATP binding site. In terms of domain architecture, tRNA-binding spans 582–688 (DFAKIDLRVA…SGAVPGMRIG (107 aa)).

It belongs to the class-I aminoacyl-tRNA synthetase family. MetG type 1 subfamily. Homodimer. The cofactor is Zn(2+).

Its subcellular location is the cytoplasm. The enzyme catalyses tRNA(Met) + L-methionine + ATP = L-methionyl-tRNA(Met) + AMP + diphosphate. Is required not only for elongation of protein synthesis but also for the initiation of all mRNA translation through initiator tRNA(fMet) aminoacylation. This chain is Methionine--tRNA ligase, found in Cupriavidus pinatubonensis (strain JMP 134 / LMG 1197) (Cupriavidus necator (strain JMP 134)).